The following is a 317-amino-acid chain: ATP synthase gamma chain (317 aa).

This sequence belongs to the ATPase gamma chain family. F-type ATPases have 2 components, CF(1) - the catalytic core - and CF(0) - the membrane proton channel. CF(1) has five subunits: alpha(3), beta(3), gamma(1), delta(1), epsilon(1). CF(0) has three main subunits: a, b and c.

Its subcellular location is the cellular thylakoid membrane. Its function is as follows. Produces ATP from ADP in the presence of a proton gradient across the membrane. The gamma chain is believed to be important in regulating ATPase activity and the flow of protons through the CF(0) complex. The chain is ATP synthase gamma chain from Acaryochloris marina (strain MBIC 11017).